The primary structure comprises 259 residues: Protein unc-50 homolog (259 aa).

Methionine 1 is subject to N-acetylmethionine. The Cytoplasmic portion of the chain corresponds to 1–82 (MLPSTSVNSL…TKDQWARDDP (82 aa)). A Phosphoserine modification is found at serine 6. Residues 83-103 (AFLVLLSIWLCVSTIGFGFVL) traverse the membrane as a helical segment. The Lumenal portion of the chain corresponds to 104–115 (DMGFFETIKLLL). A helical membrane pass occupies residues 116-136 (WVVLIDCVGVGLLIATLMWFI). The Cytoplasmic portion of the chain corresponds to 137-163 (SNKYLVKRQSRDYDVEWGYAFDVHLNA). Residues 164 to 184 (FYPLLVILHFIQLFFINHVIL) traverse the membrane as a helical segment. Over 185 to 187 (TDT) the chain is Lumenal. Residues 188-208 (FIGYLVGNTLWLVAVGYYIYV) form a helical membrane-spanning segment. Topologically, residues 209–222 (TFLGYSALPFLKNT) are cytoplasmic. Residues 223–243 (VILLYPFAPLILLYGLSLALG) traverse the membrane as a helical segment. The Lumenal segment spans residues 244-259 (WNFTHTLCSFYKYRVK).

This sequence belongs to the unc-50 family. In terms of tissue distribution, present in periodontal ligament fibroblasts (at protein level).

The protein localises to the nucleus inner membrane. It localises to the golgi apparatus membrane. Functionally, involved in the cell surface expression of neuronal nicotinic receptors. Binds RNA. This Homo sapiens (Human) protein is Protein unc-50 homolog (UNC50).